Consider the following 671-residue polypeptide: DNA ligase (671 aa).

Residues 32 to 36, 81 to 82, and Glu113 each bind NAD(+); these read DAEYD and SL. Catalysis depends on Lys115, which acts as the N6-AMP-lysine intermediate. NAD(+) is bound by residues Arg136, Glu173, Lys290, and Lys314. Zn(2+) contacts are provided by Cys408, Cys411, Cys426, and Cys432. Residues 593-671 form the BRCT domain; it reads EIDSPFAGKT…EAEMIRLLDA (79 aa).

The protein belongs to the NAD-dependent DNA ligase family. LigA subfamily. It depends on Mg(2+) as a cofactor. The cofactor is Mn(2+).

It carries out the reaction NAD(+) + (deoxyribonucleotide)n-3'-hydroxyl + 5'-phospho-(deoxyribonucleotide)m = (deoxyribonucleotide)n+m + AMP + beta-nicotinamide D-nucleotide.. Functionally, DNA ligase that catalyzes the formation of phosphodiester linkages between 5'-phosphoryl and 3'-hydroxyl groups in double-stranded DNA using NAD as a coenzyme and as the energy source for the reaction. It is essential for DNA replication and repair of damaged DNA. This Salmonella schwarzengrund (strain CVM19633) protein is DNA ligase.